A 156-amino-acid polypeptide reads, in one-letter code: Small ribosomal subunit protein uS7 (156 aa).

This sequence belongs to the universal ribosomal protein uS7 family. Part of the 30S ribosomal subunit. Contacts proteins S9 and S11.

In terms of biological role, one of the primary rRNA binding proteins, it binds directly to 16S rRNA where it nucleates assembly of the head domain of the 30S subunit. Is located at the subunit interface close to the decoding center, probably blocks exit of the E-site tRNA. The polypeptide is Small ribosomal subunit protein uS7 (Blochmanniella pennsylvanica (strain BPEN)).